The chain runs to 123 residues: PCNA-associated factor (123 aa).

A disordered region spans residues 1-123 (MVRTKADCAG…SEEAADSGDE (123 aa)). A D-box motif is present at residues 26–37 (RKTFGSSSSGSN). Positions 66-77 (QKGIGDFFGSPS) match the PIP-box motif. The KEN box signature appears at 83 to 85 (KEN). Positions 93-105 (EAGGSGAGKKPRK) match the Initiation motif motif. The segment covering 113–123 (PSEEAADSGDE) has biased composition (acidic residues).

In terms of assembly, interacts with pcna.

Its subcellular location is the nucleus. The protein resides in the cytoplasm. The protein localises to the perinuclear region. In terms of biological role, PCNA-binding protein that acts as a regulator of DNA repair during DNA replication. Following DNA damage, the interaction with pcna is disrupted, facilitating the interaction between monoubiquitinated pcna and the translesion DNA synthesis DNA polymerase eta (polh) at stalled replisomes, facilitating the bypass of replication-fork-blocking lesions. Also acts as a regulator of centrosome number. This chain is PCNA-associated factor, found in Xenopus laevis (African clawed frog).